A 181-amino-acid polypeptide reads, in one-letter code: Probable nicotinate-nucleotide adenylyltransferase (181 aa).

The protein belongs to the NadD family.

It catalyses the reaction nicotinate beta-D-ribonucleotide + ATP + H(+) = deamido-NAD(+) + diphosphate. It functions in the pathway cofactor biosynthesis; NAD(+) biosynthesis; deamido-NAD(+) from nicotinate D-ribonucleotide: step 1/1. Functionally, catalyzes the reversible adenylation of nicotinate mononucleotide (NaMN) to nicotinic acid adenine dinucleotide (NaAD). The polypeptide is Probable nicotinate-nucleotide adenylyltransferase (Campylobacter jejuni subsp. jejuni serotype O:6 (strain 81116 / NCTC 11828)).